The primary structure comprises 466 residues: Muscarinic acetylcholine receptor M2 (466 aa).

Residues 1 to 22 are Extracellular-facing; it reads MNNSTNSSNSGLALTSPYKTFE. N-linked (GlcNAc...) asparagine glycans are attached at residues Asn-2, Asn-3, and Asn-6. Residues 23-45 traverse the membrane as a helical segment; that stretch reads VVFIVLVAGSLSLVTIIGNILVM. The Cytoplasmic portion of the chain corresponds to 46–59; it reads VSIKVNRHLQTVNN. A helical membrane pass occupies residues 60–80; it reads YFLFSLACADLIIGVFSMNLY. The Extracellular portion of the chain corresponds to 81–97; that stretch reads TLYTVIGYWPLGPVVCD. Cys-96 and Cys-176 are joined by a disulfide. Residues 98–119 form a helical membrane-spanning segment; that stretch reads LWLALDYVVSNASVMNLLIISF. The Important for signaling signature appears at 120 to 122; it reads DRY. Over 120-139 the chain is Cytoplasmic; it reads DRYFCVTKPLTYPVKRTTKM. The helical transmembrane segment at 140 to 162 threads the bilayer; sequence AGMMIAAAWVLSFILWAPAILFW. Topologically, residues 163-184 are extracellular; it reads QFIVGVRTVEDGECYIQFFSNA. The chain crosses the membrane as a helical span at residues 185–209; sequence AVTFGTAIAAFYLPVIIMTVLYWHI. Over 210 to 387 the chain is Cytoplasmic; the sequence is SRASKSRIKK…PPSREKKVTR (178 aa). The segment at 218 to 320 is disordered; it reads KKDKKEPVAN…SLGHSKDENS (103 aa). A Phosphoserine modification is found at Ser-232. The segment covering 254–270 has biased composition (basic and acidic residues); the sequence is ALEHNKIQNGKAPRDAV. Polar residues-rich tracts occupy residues 284 to 293 and 304 to 313; these read NDSTSVSAVA and DENTVSTSLG. Residues 388 to 410 form a helical membrane-spanning segment; the sequence is TILAILLAFIITWAPYNVMVLIN. Over 411–418 the chain is Extracellular; sequence TFCAPCIP. A disulfide bridge connects residues Cys-413 and Cys-416. A helical membrane pass occupies residues 419-442; sequence NTVWTIGYWLCYINSTINPACYAL. The Important for signaling signature appears at 436–440; that stretch reads NPACY. Residues 443-466 are Cytoplasmic-facing; it reads CNATFKKTFKHLLMCHYKNIGATR. Residues Thr-446, Thr-450, and Thr-465 each carry the phosphothreonine modification.

The protein belongs to the G-protein coupled receptor 1 family. Muscarinic acetylcholine receptor subfamily. CHRM2 sub-subfamily. In terms of assembly, interacts with ARRB1 and ARRB2. Interacts with RACK1; the interaction regulates CHRM2 internalization. Phosphorylated in response to agonist treatment.

The protein localises to the cell membrane. Its subcellular location is the postsynaptic cell membrane. Its function is as follows. The muscarinic acetylcholine receptor mediates various cellular responses, including inhibition of adenylate cyclase, breakdown of phosphoinositides and modulation of potassium channels through the action of G proteins. Primary transducing effect is adenylate cyclase inhibition. This Sus scrofa (Pig) protein is Muscarinic acetylcholine receptor M2 (CHRM2).